The chain runs to 82 residues: Beta-defensin 113 (82 aa).

A signal peptide spans 1–16 (MKILCIFLTFVFTVSC). Cystine bridges form between Cys35/Cys61, Cys42/Cys56, and Cys46/Cys62.

The protein belongs to the beta-defensin family.

The protein resides in the secreted. In terms of biological role, has antibacterial activity. The sequence is that of Beta-defensin 113 (DEFB113) from Homo sapiens (Human).